Reading from the N-terminus, the 990-residue chain is Bifunctional glutamine synthetase adenylyltransferase/adenylyl-removing enzyme (990 aa).

Residues 1–474 (MPTDNENSMT…HFNELVEESQ (474 aa)) form an adenylyl removase region. The adenylyl transferase stretch occupies residues 484 to 990 (FIACQDAWRL…WDTLFGTCSE (507 aa)).

The protein belongs to the GlnE family. It depends on Mg(2+) as a cofactor.

It catalyses the reaction [glutamine synthetase]-O(4)-(5'-adenylyl)-L-tyrosine + phosphate = [glutamine synthetase]-L-tyrosine + ADP. The enzyme catalyses [glutamine synthetase]-L-tyrosine + ATP = [glutamine synthetase]-O(4)-(5'-adenylyl)-L-tyrosine + diphosphate. Involved in the regulation of glutamine synthetase GlnA, a key enzyme in the process to assimilate ammonia. When cellular nitrogen levels are high, the C-terminal adenylyl transferase (AT) inactivates GlnA by covalent transfer of an adenylyl group from ATP to specific tyrosine residue of GlnA, thus reducing its activity. Conversely, when nitrogen levels are low, the N-terminal adenylyl removase (AR) activates GlnA by removing the adenylyl group by phosphorolysis, increasing its activity. The regulatory region of GlnE binds the signal transduction protein PII (GlnB) which indicates the nitrogen status of the cell. In Alteromonas mediterranea (strain DSM 17117 / CIP 110805 / LMG 28347 / Deep ecotype), this protein is Bifunctional glutamine synthetase adenylyltransferase/adenylyl-removing enzyme.